Consider the following 293-residue polypeptide: Glycine--tRNA ligase alpha subunit (293 aa).

This sequence belongs to the class-II aminoacyl-tRNA synthetase family. Tetramer of two alpha and two beta subunits.

It localises to the cytoplasm. It catalyses the reaction tRNA(Gly) + glycine + ATP = glycyl-tRNA(Gly) + AMP + diphosphate. The protein is Glycine--tRNA ligase alpha subunit of Aliarcobacter butzleri (strain RM4018) (Arcobacter butzleri).